A 141-amino-acid chain; its full sequence is MEQPTSSTNGEKTKSPCESNNKKNDEMQEVPNRVLAPEQSLKNTKTSEYPIIFVYYLRKGKKINSNQLENEQSQENSINPIQKEEDEGVDLSEGSSNEDEDLGPCEGPSKEDKDLDSSEGSSQEDEDLGLSEGSSQDSGED.

Positions 1-10 (MEQPTSSTNG) are enriched in polar residues. Disordered stretches follow at residues 1–47 (MEQP…TKTS) and 66–141 (NQLE…SGED). Over residues 11–26 (EKTKSPCESNNKKNDE) the composition is skewed to basic and acidic residues. Polar residues predominate over residues 66–80 (NQLENEQSQENSINP). Residues 84 to 103 (EEDEGVDLSEGSSNEDEDLG) are compositionally biased toward acidic residues. A compositionally biased stretch (polar residues) spans 132 to 141 (EGSSQDSGED).

Belongs to the SPAN-X family.

This chain is Sperm protein associated with the nucleus on the X chromosome N3 (SPANXN3), found in Homo sapiens (Human).